Reading from the N-terminus, the 456-residue chain is Enolase (456 aa).

Glutamine 164 is a binding site for (2R)-2-phosphoglycerate. Residue glutamate 207 is the Proton donor of the active site. Mg(2+) contacts are provided by aspartate 244, glutamate 287, and aspartate 314. Lysine 339, arginine 368, serine 369, and lysine 390 together coordinate (2R)-2-phosphoglycerate. Lysine 339 serves as the catalytic Proton acceptor.

The protein belongs to the enolase family. In terms of assembly, component of the RNA degradosome, a multiprotein complex involved in RNA processing and mRNA degradation. Requires Mg(2+) as cofactor.

The protein resides in the cytoplasm. Its subcellular location is the secreted. The protein localises to the cell surface. It catalyses the reaction (2R)-2-phosphoglycerate = phosphoenolpyruvate + H2O. It participates in carbohydrate degradation; glycolysis; pyruvate from D-glyceraldehyde 3-phosphate: step 4/5. Catalyzes the reversible conversion of 2-phosphoglycerate (2-PG) into phosphoenolpyruvate (PEP). It is essential for the degradation of carbohydrates via glycolysis. The protein is Enolase of Francisella tularensis subsp. holarctica (strain OSU18).